Here is a 337-residue protein sequence, read N- to C-terminus: Glyceraldehyde-3-phosphate dehydrogenase (337 aa).

Residues 12–13 (RI), Asp-34, and Arg-79 each bind NAD(+). D-glyceraldehyde 3-phosphate-binding positions include 150-152 (SCT), Thr-181, 210-211 (TG), and Arg-233. Catalysis depends on Cys-151, which acts as the Nucleophile. NAD(+) is bound at residue Asn-315.

The protein belongs to the glyceraldehyde-3-phosphate dehydrogenase family. As to quaternary structure, homotetramer.

Its subcellular location is the cytoplasm. It carries out the reaction D-glyceraldehyde 3-phosphate + phosphate + NAD(+) = (2R)-3-phospho-glyceroyl phosphate + NADH + H(+). The protein operates within carbohydrate degradation; glycolysis; pyruvate from D-glyceraldehyde 3-phosphate: step 1/5. This Cryphonectria parasitica (Chestnut blight fungus) protein is Glyceraldehyde-3-phosphate dehydrogenase.